The chain runs to 580 residues: 2-succinyl-5-enolpyruvyl-6-hydroxy-3-cyclohexene-1-carboxylate synthase (580 aa).

The protein belongs to the TPP enzyme family. MenD subfamily. Homodimer. Mg(2+) serves as cofactor. Mn(2+) is required as a cofactor. The cofactor is thiamine diphosphate.

It catalyses the reaction isochorismate + 2-oxoglutarate + H(+) = 5-enolpyruvoyl-6-hydroxy-2-succinyl-cyclohex-3-ene-1-carboxylate + CO2. It functions in the pathway quinol/quinone metabolism; 1,4-dihydroxy-2-naphthoate biosynthesis; 1,4-dihydroxy-2-naphthoate from chorismate: step 2/7. The protein operates within quinol/quinone metabolism; menaquinone biosynthesis. Catalyzes the thiamine diphosphate-dependent decarboxylation of 2-oxoglutarate and the subsequent addition of the resulting succinic semialdehyde-thiamine pyrophosphate anion to isochorismate to yield 2-succinyl-5-enolpyruvyl-6-hydroxy-3-cyclohexene-1-carboxylate (SEPHCHC). The sequence is that of 2-succinyl-5-enolpyruvyl-6-hydroxy-3-cyclohexene-1-carboxylate synthase from Listeria monocytogenes serovar 1/2a (strain ATCC BAA-679 / EGD-e).